We begin with the raw amino-acid sequence, 1088 residues long: RNA-directed RNA polymerase (1088 aa).

In terms of domain architecture, RdRp catalytic spans 501–687 (LSYGDVTRFL…AKRYIAGGKI (187 aa)).

This sequence belongs to the reoviridae RNA-directed RNA polymerase family. Interacts with VP3 (Potential). Interacts with VP2; this interaction activates VP1. Interacts with NSP5; this interaction is probably necessary for the formation of functional virus factories. Interacts with NSP2; this interaction is weak. Requires Mg(2+) as cofactor.

It is found in the virion. The enzyme catalyses RNA(n) + a ribonucleoside 5'-triphosphate = RNA(n+1) + diphosphate. Functionally, RNA-directed RNA polymerase that is involved in both transcription and genome replication. Together with VP3 capping enzyme, forms an enzyme complex positioned near the channels situated at each of the five-fold vertices of the core. Following infection, the outermost layer of the virus is lost, leaving a double-layered particle (DLP) made up of the core and VP6 shell. VP1 then catalyzes the transcription of fully conservative plus-strand genomic RNAs that are extruded through the DLP's channels into the cytoplasm where they function as mRNAs for translation of viral proteins. One copy of each of the viral (+)RNAs is also recruited during core assembly, together with newly synthesized polymerase complexes and VP2. The polymerase of these novo-formed particles catalyzes the synthesis of complementary minus-strands leading to dsRNA formation. To do so, the polymerase specifically recognizes and binds 4 bases 5'-UGUG-3' in the conserved 3'-sequence of plus-strand RNA templates. VP2 presumably activates the autoinhibited VP1-RNA complex to coordinate packaging and genome replication. Once dsRNA synthesis is complete, the polymerase switches to the transcriptional mode, thus providing secondary transcription. This chain is RNA-directed RNA polymerase, found in Rotavirus A (strain RVA/SA11-Patton/G3P[X]) (RV-A).